Reading from the N-terminus, the 319-residue chain is ATP-dependent 6-phosphofructokinase (319 aa).

An ATP-binding site is contributed by glycine 11. Residue 21–25 (RAVVR) coordinates ADP. Residues 72–73 (RC) and 102–105 (GDGS) each bind ATP. Aspartate 103 contacts Mg(2+). Residue 125-127 (TID) participates in substrate binding. Aspartate 127 (proton acceptor) is an active-site residue. Arginine 154 contributes to the ADP binding site. Substrate contacts are provided by residues arginine 162 and 169–171 (MGR). ADP-binding positions include 185 to 187 (GAE), arginine 211, and 213 to 215 (KKH). Substrate contacts are provided by residues glutamate 222, arginine 243, and 249 to 252 (HVQR).

Belongs to the phosphofructokinase type A (PFKA) family. ATP-dependent PFK group I subfamily. Prokaryotic clade 'B1' sub-subfamily. As to quaternary structure, homotetramer. Requires Mg(2+) as cofactor.

The protein resides in the cytoplasm. The enzyme catalyses beta-D-fructose 6-phosphate + ATP = beta-D-fructose 1,6-bisphosphate + ADP + H(+). It functions in the pathway carbohydrate degradation; glycolysis; D-glyceraldehyde 3-phosphate and glycerone phosphate from D-glucose: step 3/4. With respect to regulation, allosterically activated by ADP and other diphosphonucleosides, and allosterically inhibited by phosphoenolpyruvate. Its function is as follows. Catalyzes the phosphorylation of D-fructose 6-phosphate to fructose 1,6-bisphosphate by ATP, the first committing step of glycolysis. The polypeptide is ATP-dependent 6-phosphofructokinase (Geobacillus sp. (strain WCH70)).